Reading from the N-terminus, the 320-residue chain is o-succinylbenzoate synthase (320 aa).

Lys-133 functions as the Proton donor in the catalytic mechanism. Mg(2+) contacts are provided by Asp-161, Glu-190, and Asp-213. Lys-235 acts as the Proton acceptor in catalysis.

Belongs to the mandelate racemase/muconate lactonizing enzyme family. MenC type 1 subfamily. A divalent metal cation serves as cofactor.

It catalyses the reaction (1R,6R)-6-hydroxy-2-succinyl-cyclohexa-2,4-diene-1-carboxylate = 2-succinylbenzoate + H2O. Its pathway is quinol/quinone metabolism; 1,4-dihydroxy-2-naphthoate biosynthesis; 1,4-dihydroxy-2-naphthoate from chorismate: step 4/7. It participates in quinol/quinone metabolism; menaquinone biosynthesis. In terms of biological role, converts 2-succinyl-6-hydroxy-2,4-cyclohexadiene-1-carboxylate (SHCHC) to 2-succinylbenzoate (OSB). This chain is o-succinylbenzoate synthase, found in Salmonella choleraesuis (strain SC-B67).